Consider the following 355-residue polypeptide: UDP-N-acetylglucosamine--N-acetylmuramyl-(pentapeptide) pyrophosphoryl-undecaprenol N-acetylglucosamine transferase (355 aa).

Residues Thr13 to Gly15, Asn125, Arg162, Ser190, Ile244, and Gln289 each bind UDP-N-acetyl-alpha-D-glucosamine.

Belongs to the glycosyltransferase 28 family. MurG subfamily.

The protein localises to the cell inner membrane. The enzyme catalyses di-trans,octa-cis-undecaprenyl diphospho-N-acetyl-alpha-D-muramoyl-L-alanyl-D-glutamyl-meso-2,6-diaminopimeloyl-D-alanyl-D-alanine + UDP-N-acetyl-alpha-D-glucosamine = di-trans,octa-cis-undecaprenyl diphospho-[N-acetyl-alpha-D-glucosaminyl-(1-&gt;4)]-N-acetyl-alpha-D-muramoyl-L-alanyl-D-glutamyl-meso-2,6-diaminopimeloyl-D-alanyl-D-alanine + UDP + H(+). It functions in the pathway cell wall biogenesis; peptidoglycan biosynthesis. Its function is as follows. Cell wall formation. Catalyzes the transfer of a GlcNAc subunit on undecaprenyl-pyrophosphoryl-MurNAc-pentapeptide (lipid intermediate I) to form undecaprenyl-pyrophosphoryl-MurNAc-(pentapeptide)GlcNAc (lipid intermediate II). The chain is UDP-N-acetylglucosamine--N-acetylmuramyl-(pentapeptide) pyrophosphoryl-undecaprenol N-acetylglucosamine transferase from Neisseria meningitidis serogroup A / serotype 4A (strain DSM 15465 / Z2491).